We begin with the raw amino-acid sequence, 360 residues long: Polyamine aminopropyltransferase 2 (360 aa).

The PABS domain occupies 68–299 (DIWDEISLKE…TDWGFHIAAN (232 aa)). Residue Q94 coordinates S-methyl-5'-thioadenosine. Spermidine is bound by residues H123 and D147. S-methyl-5'-thioadenosine is bound by residues D167 and 201–202 (DA). The active-site Proton acceptor is D219.

This sequence belongs to the spermidine/spermine synthase family. In terms of assembly, homodimer or homotetramer.

The protein resides in the cytoplasm. The enzyme catalyses S-adenosyl 3-(methylsulfanyl)propylamine + putrescine = S-methyl-5'-thioadenosine + spermidine + H(+). Its pathway is amine and polyamine biosynthesis; spermidine biosynthesis; spermidine from putrescine: step 1/1. Its function is as follows. Catalyzes the irreversible transfer of a propylamine group from the amino donor S-adenosylmethioninamine (decarboxy-AdoMet) to putrescine (1,4-diaminobutane) to yield spermidine. This Bacillus anthracis protein is Polyamine aminopropyltransferase 2.